A 150-amino-acid polypeptide reads, in one-letter code: Leukotriene C4 synthase (150 aa).

The Cytoplasmic segment spans residues 1–6; the sequence is MKEETA. The helical transmembrane segment at 7–27 threads the bilayer; sequence LLATVTLLGVLLQAYFSLQVI. Residues 28-48 lie on the Lumenal side of the membrane; it reads SARRTFHVSPPLTSGPPEFER. Arginine 30 is a binding site for glutathione. Arginine 31 functions as the Proton donor in the catalytic mechanism. Serine 36 is modified (phosphoserine). The helical transmembrane segment at 49–69 threads the bilayer; the sequence is VFRAQVNCSEYFPLFLATLWV. Glutathione-binding positions include 51 to 55 and 58 to 59; these read RAQVN and EY. The Cytoplasmic segment spans residues 70-73; sequence AGIF. The chain crosses the membrane as a helical span at residues 74–94; sequence FHEGAAALCGLFYLFARLRYF. Residue 93-97 coordinates glutathione; it reads YFQGY. At 95-104 the chain is on the lumenal side; it reads QGYARSAQHR. Residue arginine 104 is the Proton acceptor of the active site. A helical membrane pass occupies residues 105-124; sequence LDPLYASARALWLLVAMAAL. The Cytoplasmic portion of the chain corresponds to 125–150; the sequence is GLLVHFLPGTLRAALFRWLQVLLPMA.

The protein belongs to the MAPEG family. Homotrimer. Interacts with ALOX5AP and ALOX5. Post-translationally, phosphorylation at Ser-36 by RPS6KB1 inhibits the leukotriene-C4 synthase activity.

The protein localises to the nucleus outer membrane. It localises to the endoplasmic reticulum membrane. It is found in the nucleus membrane. It carries out the reaction leukotriene C4 = leukotriene A4 + glutathione. It catalyses the reaction (13S,14S)-epoxy-(4Z,7Z,9E,11E,16Z,19Z)-docosahexaenoate + glutathione = (13R)-S-glutathionyl-(14S)-hydroxy-(4Z,7Z,9E,11E,16Z,19Z)-docosahexaenoate. It functions in the pathway lipid metabolism; leukotriene C4 biosynthesis. Inhibited by MK886. Catalyzes the conjugation of leukotriene A4 with reduced glutathione (GSH) to form leukotriene C4 with high specificity. Can also catalyze the transfer of a glutathionyl group from glutathione (GSH) to 13(S),14(S)-epoxy-docosahexaenoic acid to form maresin conjugate in tissue regeneration 1 (MCTR1), a bioactive lipid mediator that possess potent anti-inflammatory and proresolving actions. This chain is Leukotriene C4 synthase (Ltc4s), found in Rattus norvegicus (Rat).